The following is a 438-amino-acid chain: Probable trafficking protein particle complex subunit 13 homolog (438 aa).

This sequence belongs to the TRAPPC13 family.

This is Probable trafficking protein particle complex subunit 13 homolog from Drosophila melanogaster (Fruit fly).